A 424-amino-acid chain; its full sequence is 3-isopropylmalate dehydratase large subunit (424 aa).

The [4Fe-4S] cluster site is built by C299, C359, and C362.

Belongs to the aconitase/IPM isomerase family. LeuC type 2 subfamily. In terms of assembly, heterodimer of LeuC and LeuD. [4Fe-4S] cluster serves as cofactor.

The enzyme catalyses (2R,3S)-3-isopropylmalate = (2S)-2-isopropylmalate. The protein operates within amino-acid biosynthesis; L-leucine biosynthesis; L-leucine from 3-methyl-2-oxobutanoate: step 2/4. Its function is as follows. Catalyzes the isomerization between 2-isopropylmalate and 3-isopropylmalate, via the formation of 2-isopropylmaleate. The protein is 3-isopropylmalate dehydratase large subunit of Hydrogenobaculum sp. (strain Y04AAS1).